Consider the following 354-residue polypeptide: Holliday junction branch migration complex subunit RuvB (354 aa).

The tract at residues 1–22 (MTLQTDDFAPAPARRVVSAAPA) is disordered. Positions 5–194 (TDDFAPAPAR…FGIVARLEFY (190 aa)) are large ATPase domain (RuvB-L). Positions 9–22 (APAPARRVVSAAPA) are enriched in low complexity. ATP-binding positions include L33, R34, G75, K78, T79, T80, 141–143 (EDY), R184, Y194, and R231. T79 provides a ligand contact to Mg(2+). The interval 195–265 (SAQELARIVK…IAERALAMLD (71 aa)) is small ATPAse domain (RuvB-S). The tract at residues 268-354 (PEGLDVMDRK…GAQAPGLFAV (87 aa)) is head domain (RuvB-H). Positions 323 and 328 each coordinate DNA.

The protein belongs to the RuvB family. Homohexamer. Forms an RuvA(8)-RuvB(12)-Holliday junction (HJ) complex. HJ DNA is sandwiched between 2 RuvA tetramers; dsDNA enters through RuvA and exits via RuvB. An RuvB hexamer assembles on each DNA strand where it exits the tetramer. Each RuvB hexamer is contacted by two RuvA subunits (via domain III) on 2 adjacent RuvB subunits; this complex drives branch migration. In the full resolvosome a probable DNA-RuvA(4)-RuvB(12)-RuvC(2) complex forms which resolves the HJ.

It localises to the cytoplasm. It carries out the reaction ATP + H2O = ADP + phosphate + H(+). The RuvA-RuvB-RuvC complex processes Holliday junction (HJ) DNA during genetic recombination and DNA repair, while the RuvA-RuvB complex plays an important role in the rescue of blocked DNA replication forks via replication fork reversal (RFR). RuvA specifically binds to HJ cruciform DNA, conferring on it an open structure. The RuvB hexamer acts as an ATP-dependent pump, pulling dsDNA into and through the RuvAB complex. RuvB forms 2 homohexamers on either side of HJ DNA bound by 1 or 2 RuvA tetramers; 4 subunits per hexamer contact DNA at a time. Coordinated motions by a converter formed by DNA-disengaged RuvB subunits stimulates ATP hydrolysis and nucleotide exchange. Immobilization of the converter enables RuvB to convert the ATP-contained energy into a lever motion, pulling 2 nucleotides of DNA out of the RuvA tetramer per ATP hydrolyzed, thus driving DNA branch migration. The RuvB motors rotate together with the DNA substrate, which together with the progressing nucleotide cycle form the mechanistic basis for DNA recombination by continuous HJ branch migration. Branch migration allows RuvC to scan DNA until it finds its consensus sequence, where it cleaves and resolves cruciform DNA. In Verminephrobacter eiseniae (strain EF01-2), this protein is Holliday junction branch migration complex subunit RuvB.